Consider the following 483-residue polypeptide: Iron-sulfur cluster assembly SufBD family protein ycf24 (483 aa).

This sequence belongs to the iron-sulfur cluster assembly SufBD family.

It is found in the plastid. The protein resides in the chloroplast. The protein is Iron-sulfur cluster assembly SufBD family protein ycf24 (ycf24) of Guillardia theta (Cryptophyte).